Here is a 398-residue protein sequence, read N- to C-terminus: Phosphoglycerate kinase (398 aa).

Substrate contacts are provided by residues 23 to 25, Arg38, 61 to 64, Arg122, and Arg155; these read DFN and HMGK. Residues Lys206, Gly297, Glu328, and 354–357 contribute to the ATP site; that span reads GGDS.

It belongs to the phosphoglycerate kinase family. In terms of assembly, monomer.

It localises to the cytoplasm. The catalysed reaction is (2R)-3-phosphoglycerate + ATP = (2R)-3-phospho-glyceroyl phosphate + ADP. It participates in carbohydrate degradation; glycolysis; pyruvate from D-glyceraldehyde 3-phosphate: step 2/5. The chain is Phosphoglycerate kinase from Clostridium botulinum (strain Langeland / NCTC 10281 / Type F).